Consider the following 133-residue polypeptide: Cytochrome c-type biogenesis protein CcmE (133 aa).

Over 1-7 the chain is Cytoplasmic; that stretch reads MKKKHKR. Residues 8–28 traverse the membrane as a helical; Signal-anchor for type II membrane protein segment; sequence LLITSGIFCFLSCIVFFILTT. Over 29–133 the chain is Periplasmic; that stretch reads LKENISFFYT…YMPKVLKQIP (105 aa). His-120 and Tyr-124 together coordinate heme.

This sequence belongs to the CcmE/CycJ family.

Its subcellular location is the cell inner membrane. Heme chaperone required for the biogenesis of c-type cytochromes. Transiently binds heme delivered by CcmC and transfers the heme to apo-cytochromes in a process facilitated by CcmF and CcmH. The polypeptide is Cytochrome c-type biogenesis protein CcmE (Wolbachia sp. subsp. Drosophila simulans (strain wRi)).